A 317-amino-acid chain; its full sequence is Transaldolase (317 aa).

Lys132 acts as the Schiff-base intermediate with substrate in catalysis.

The protein belongs to the transaldolase family. Type 1 subfamily. Homodimer.

The protein localises to the cytoplasm. The enzyme catalyses D-sedoheptulose 7-phosphate + D-glyceraldehyde 3-phosphate = D-erythrose 4-phosphate + beta-D-fructose 6-phosphate. The protein operates within carbohydrate degradation; pentose phosphate pathway; D-glyceraldehyde 3-phosphate and beta-D-fructose 6-phosphate from D-ribose 5-phosphate and D-xylulose 5-phosphate (non-oxidative stage): step 2/3. Its function is as follows. Transaldolase is important for the balance of metabolites in the pentose-phosphate pathway. This is Transaldolase from Yersinia pseudotuberculosis serotype O:3 (strain YPIII).